The chain runs to 83 residues: Alpha-elapitoxin-Ppr1 (83 aa).

The signal sequence occupies residues 1-21 (MKTLLLTLVVVTIVCLDLGYT). Disulfide bonds link cysteine 24-cysteine 45, cysteine 38-cysteine 62, cysteine 64-cysteine 75, and cysteine 76-cysteine 81.

It belongs to the three-finger toxin family. Short-chain subfamily. Type I alpha-neurotoxin sub-subfamily. As to expression, expressed by the venom gland.

The protein resides in the secreted. Bird-specific neurotoxin (tested on chicken) that acts as a pseudo-irreversible antagonist at the nicotinic acetylcholine receptor (nAChR) of the skeletal neuromuscular junction. Has no significant effect on the electrically-induced twitches of the rat isolated phrenic nerve-diaphragm preparation. This chain is Alpha-elapitoxin-Ppr1, found in Pseudechis porphyriacus (Red-bellied black snake).